The following is a 239-amino-acid chain: uncharacterized protein (239 aa).

8 consecutive transmembrane segments (helical) span residues 4–24 (LIPK…LGMV), 29–49 (VIWH…VYPV), 61–81 (YQKW…ISVF), 84–104 (PPLI…MYFA), 116–136 (VAGV…GMGT), 139–159 (GWAW…SFYV), 180–200 (LLLP…AFIP), and 218–238 (IGIL…LFIT).

The protein to H.influenzae HI_1626.

It is found in the cell membrane. This is an uncharacterized protein from Bacillus subtilis (strain 168).